The chain runs to 286 residues: Glycine--tRNA ligase alpha subunit (286 aa).

It belongs to the class-II aminoacyl-tRNA synthetase family. As to quaternary structure, tetramer of two alpha and two beta subunits.

The protein resides in the cytoplasm. The catalysed reaction is tRNA(Gly) + glycine + ATP = glycyl-tRNA(Gly) + AMP + diphosphate. The chain is Glycine--tRNA ligase alpha subunit from Thermotoga neapolitana (strain ATCC 49049 / DSM 4359 / NBRC 107923 / NS-E).